Reading from the N-terminus, the 32-residue chain is Photosystem II reaction center protein Z (32 aa).

Residues Ile-12 to Ile-32 form a helical membrane-spanning segment.

Belongs to the PsbZ family. In terms of assembly, PSII is composed of 1 copy each of membrane proteins PsbA, PsbB, PsbC, PsbD, PsbE, PsbF, PsbH, PsbI, PsbJ, PsbK, PsbL, PsbM, PsbT, PsbY, PsbZ, Psb30/Ycf12, at least 3 peripheral proteins of the oxygen-evolving complex and a large number of cofactors. It forms dimeric complexes.

Its subcellular location is the plastid. It is found in the chloroplast thylakoid membrane. In terms of biological role, may control the interaction of photosystem II (PSII) cores with the light-harvesting antenna, regulates electron flow through the 2 photosystem reaction centers. PSII is a light-driven water plastoquinone oxidoreductase, using light energy to abstract electrons from H(2)O, generating a proton gradient subsequently used for ATP formation. The sequence is that of Photosystem II reaction center protein Z from Euglena anabaena (Euglenaria anabaena).